The primary structure comprises 315 residues: Glycine--tRNA ligase alpha subunit (315 aa).

It belongs to the class-II aminoacyl-tRNA synthetase family. Tetramer of two alpha and two beta subunits.

Its subcellular location is the cytoplasm. It catalyses the reaction tRNA(Gly) + glycine + ATP = glycyl-tRNA(Gly) + AMP + diphosphate. This Pseudomonas putida (strain ATCC 47054 / DSM 6125 / CFBP 8728 / NCIMB 11950 / KT2440) protein is Glycine--tRNA ligase alpha subunit.